A 252-amino-acid polypeptide reads, in one-letter code: Hydroxyacylglutathione hydrolase (252 aa).

Zn(2+)-binding residues include histidine 54, histidine 56, aspartate 58, histidine 59, histidine 111, aspartate 128, and histidine 166.

Belongs to the metallo-beta-lactamase superfamily. Glyoxalase II family. As to quaternary structure, monomer. The cofactor is Zn(2+).

It catalyses the reaction an S-(2-hydroxyacyl)glutathione + H2O = a 2-hydroxy carboxylate + glutathione + H(+). Its pathway is secondary metabolite metabolism; methylglyoxal degradation; (R)-lactate from methylglyoxal: step 2/2. In terms of biological role, thiolesterase that catalyzes the hydrolysis of S-D-lactoyl-glutathione to form glutathione and D-lactic acid. The chain is Hydroxyacylglutathione hydrolase from Aliivibrio salmonicida (strain LFI1238) (Vibrio salmonicida (strain LFI1238)).